Here is a 372-residue protein sequence, read N- to C-terminus: Lysophosphatidic acid receptor 5 (372 aa).

Residues 1–26 (MLANSSSTNSSVLPCPDYRPTHRLHL) lie on the Extracellular side of the membrane. 2 N-linked (GlcNAc...) asparagine glycosylation sites follow: N4 and N9. Residues 27–47 (VVYSLVLAAGLPLNALALWVF) traverse the membrane as a helical segment. The Cytoplasmic segment spans residues 48–55 (LRALRVHS). The chain crosses the membrane as a helical span at residues 56–76 (VVSVYMCNLAASDLLFTLSLP). Topologically, residues 77-96 (VRLSYYALHHWPFPDLLCQT) are extracellular. A disulfide bond links C94 and C175. A helical membrane pass occupies residues 97-117 (TGAIFQMNMYGSCIFLMLINV). Residues 118–136 (DRYAAIVHPLRLRHLRRPR) lie on the Cytoplasmic side of the membrane. A helical membrane pass occupies residues 137-157 (VARLLCLGVWALILVFAVPAA). Residues 158-187 (RVHRPSRCRYRDLEVRLCFESFSDELWKGR) are Extracellular-facing. The chain crosses the membrane as a helical span at residues 188-208 (LLPLVLLAEALGFLLPLAAVV). Over 209–239 (YSSGRVFWTLARPDATQSQRRRKTVRLLLAN) the chain is Cytoplasmic. The helical transmembrane segment at 240–260 (LVIFLLCFVPYNSTLAVYGLL) threads the bilayer. Over 261-276 (RSKLVAASVPARDRVR) the chain is Extracellular. Residues 277-297 (GVLMVMVLLAGANCVLDPLVY) traverse the membrane as a helical segment. Topologically, residues 298 to 372 (YFSAEGFRNT…FTQCPQDSAL (75 aa)) are cytoplasmic. A disordered region spans residues 312 to 372 (GTPHRARTSA…FTQCPQDSAL (61 aa)). Polar residues-rich tracts occupy residues 332-341 (SERSAVTTDA) and 357-372 (SHSLSSFTQCPQDSAL).

This sequence belongs to the G-protein coupled receptor 1 family. As to expression, not expressed in frontal cortex, basal forebrain, caudate putamen, thalamus, or hippocampus.

Its subcellular location is the cell membrane. Its function is as follows. Receptor for lysophosphatidic acid (LPA), a mediator of diverse cellular activities. This Homo sapiens (Human) protein is Lysophosphatidic acid receptor 5 (LPAR5).